The primary structure comprises 502 residues: ATP synthase subunit alpha (502 aa).

169–176 (GDRQTGKT) is an ATP binding site.

This sequence belongs to the ATPase alpha/beta chains family. As to quaternary structure, F-type ATPases have 2 components, CF(1) - the catalytic core - and CF(0) - the membrane proton channel. CF(1) has five subunits: alpha(3), beta(3), gamma(1), delta(1), epsilon(1). CF(0) has three main subunits: a(1), b(2) and c(9-12). The alpha and beta chains form an alternating ring which encloses part of the gamma chain. CF(1) is attached to CF(0) by a central stalk formed by the gamma and epsilon chains, while a peripheral stalk is formed by the delta and b chains.

Its subcellular location is the cell membrane. The catalysed reaction is ATP + H2O + 4 H(+)(in) = ADP + phosphate + 5 H(+)(out). In terms of biological role, produces ATP from ADP in the presence of a proton gradient across the membrane. The alpha chain is a regulatory subunit. This chain is ATP synthase subunit alpha, found in Desulfitobacterium hafniense (strain Y51).